Reading from the N-terminus, the 115-residue chain is Chaperone protein PrsD (115 aa).

This sequence belongs to the periplasmic pilus chaperone family.

The protein resides in the periplasm. In terms of biological role, mediates assembly of pili by forming soluble multimeric complexes with pili subunits as an intermediate step in the assembly process. This chain is Chaperone protein PrsD (prsD), found in Escherichia coli.